A 214-amino-acid chain; its full sequence is Adenylate kinase (214 aa).

10–15 provides a ligand contact to ATP; it reads GAGKGT. An NMP region spans residues 30–59; that stretch reads STGDMFREAVASKSELGKKVEEILKRGDLV. AMP is bound by residues Thr31, Arg36, 57 to 59, 85 to 88, and Gln92; these read DLV and GFPR. The tract at residues 126 to 163 is LID; it reads NRRICSNCGKIYNLITLPPKVDGKCDVCGGTLYQREDD. Arg127 contacts ATP. Zn(2+)-binding residues include Cys130 and Cys133. 136-137 serves as a coordination point for ATP; sequence IY. 2 residues coordinate Zn(2+): Cys150 and Cys153. The AMP site is built by Arg160 and Arg171. An ATP-binding site is contributed by Leu199.

The protein belongs to the adenylate kinase family. In terms of assembly, monomer.

Its subcellular location is the cytoplasm. It carries out the reaction AMP + ATP = 2 ADP. It participates in purine metabolism; AMP biosynthesis via salvage pathway; AMP from ADP: step 1/1. Its function is as follows. Catalyzes the reversible transfer of the terminal phosphate group between ATP and AMP. Plays an important role in cellular energy homeostasis and in adenine nucleotide metabolism. The polypeptide is Adenylate kinase (Thermosipho africanus (strain TCF52B)).